The primary structure comprises 457 residues: Cell division protein FtsZ (457 aa).

Residues 26–30 (GGGGN), 115–117 (GTG), Glu146, Lys150, and Asp193 each bind GTP. A compositionally biased stretch (basic and acidic residues) spans 429 to 447 (KKDVVRSEESERPAFESER). Residues 429 to 457 (KKDVVRSEESERPAFESERSSSPTTISFN) form a disordered region. The span at 448–457 (SSSPTTISFN) shows a compositional bias: polar residues.

This sequence belongs to the FtsZ family. In terms of assembly, homodimer. Polymerizes to form a dynamic ring structure in a strictly GTP-dependent manner. Interacts directly with several other division proteins.

Its subcellular location is the cytoplasm. Essential cell division protein that forms a contractile ring structure (Z ring) at the future cell division site. The regulation of the ring assembly controls the timing and the location of cell division. One of the functions of the FtsZ ring is to recruit other cell division proteins to the septum to produce a new cell wall between the dividing cells. Binds GTP and shows GTPase activity. This chain is Cell division protein FtsZ, found in Porphyromonas gingivalis (strain ATCC BAA-308 / W83).